The primary structure comprises 191 residues: Holliday junction branch migration complex subunit RuvA (191 aa).

A domain I region spans residues 1 to 64; that stretch reads MIGRITGTLA…EDAHLLYGFG (64 aa). Residues 65–138 are domain II; the sequence is SEVERAAFRE…KGKPVFAGAL (74 aa). Positions 138 to 141 are flexible linker; the sequence is LASV. The tract at residues 142 to 191 is domain III; that stretch reads PSAGASDDVRQALLALGYNERETAATVRELPAGLAVGEAIRQALRALSRA.

It belongs to the RuvA family. Homotetramer. Forms an RuvA(8)-RuvB(12)-Holliday junction (HJ) complex. HJ DNA is sandwiched between 2 RuvA tetramers; dsDNA enters through RuvA and exits via RuvB. An RuvB hexamer assembles on each DNA strand where it exits the tetramer. Each RuvB hexamer is contacted by two RuvA subunits (via domain III) on 2 adjacent RuvB subunits; this complex drives branch migration. In the full resolvosome a probable DNA-RuvA(4)-RuvB(12)-RuvC(2) complex forms which resolves the HJ.

Its subcellular location is the cytoplasm. Its function is as follows. The RuvA-RuvB-RuvC complex processes Holliday junction (HJ) DNA during genetic recombination and DNA repair, while the RuvA-RuvB complex plays an important role in the rescue of blocked DNA replication forks via replication fork reversal (RFR). RuvA specifically binds to HJ cruciform DNA, conferring on it an open structure. The RuvB hexamer acts as an ATP-dependent pump, pulling dsDNA into and through the RuvAB complex. HJ branch migration allows RuvC to scan DNA until it finds its consensus sequence, where it cleaves and resolves the cruciform DNA. This chain is Holliday junction branch migration complex subunit RuvA, found in Thiobacillus denitrificans (strain ATCC 25259 / T1).